The primary structure comprises 708 residues: Polyribonucleotide nucleotidyltransferase (708 aa).

Positions 490 and 496 each coordinate Mg(2+). Residues 557-619 (PRIETMTIPK…KSIDDAIRLI (63 aa)) enclose the KH domain. One can recognise an S1 motif domain in the interval 629-699 (GEVYKGKVRS…KTGKFKLSRK (71 aa)).

This sequence belongs to the polyribonucleotide nucleotidyltransferase family. Mg(2+) serves as cofactor.

It localises to the cytoplasm. The catalysed reaction is RNA(n+1) + phosphate = RNA(n) + a ribonucleoside 5'-diphosphate. In terms of biological role, involved in mRNA degradation. Catalyzes the phosphorolysis of single-stranded polyribonucleotides processively in the 3'- to 5'-direction. The protein is Polyribonucleotide nucleotidyltransferase of Bacteroides fragilis (strain ATCC 25285 / DSM 2151 / CCUG 4856 / JCM 11019 / LMG 10263 / NCTC 9343 / Onslow / VPI 2553 / EN-2).